The sequence spans 568 residues: Alpha-1,3-galactosidase A (568 aa).

Positions 1 to 17 (MMSVWFIQLAIFAQSRI) are cleaved as a signal peptide. 6 PbH1 repeats span residues 87–125 (LYLNTLKNITIDGCGSTLLMNGEMTSFVLDKCEGIVLKN), 243–265 (SKGILLENINFYYLGNFGVVCQY), 299–321 (RGMIDIKNSRFIGAHDDPINIHG), 409–431 (TPEVRITNNYFARVPTRGILITT), 432–454 (RRKSLIEGNTFYGMQMSGIFVAD), and 465–486 (VHDLTIRQNTFLNCGEPIISID).

Belongs to the glycosyl hydrolase 110 family. A subfamily.

It carries out the reaction Hydrolysis of terminal, non-reducing branched (1-&gt;3)-alpha-D-galactosidic residues, producing free D-galactose.. It catalyses the reaction Hydrolysis of terminal, non-reducing alpha-D-galactose residues in alpha-D-galactosides, including galactose oligosaccharides, galactomannans and galactolipids.. Functionally, alpha-galactosidase that specifically removes branched alpha-1,3-linked galactose residues present in blood group B antigens. Has no activity toward linear alpha-1,3-linked galactose residues. The chain is Alpha-1,3-galactosidase A (glaA) from Bacteroides thetaiotaomicron (strain ATCC 29148 / DSM 2079 / JCM 5827 / CCUG 10774 / NCTC 10582 / VPI-5482 / E50).